The primary structure comprises 437 residues: Aspartate aminotransferase, mitochondrial (437 aa).

Residues G72, W167, and N220 each contribute to the L-aspartate site. K284 bears the N6-(pyridoxal phosphate)lysine mark. R413 serves as a coordination point for L-aspartate.

Belongs to the class-I pyridoxal-phosphate-dependent aminotransferase family. Homodimer. It depends on pyridoxal 5'-phosphate as a cofactor.

The protein resides in the mitochondrion matrix. The enzyme catalyses L-aspartate + 2-oxoglutarate = oxaloacetate + L-glutamate. Its function is as follows. Plays a key role in amino acid metabolism. Important for metabolite exchange between mitochondria and cytosol. This is Aspartate aminotransferase, mitochondrial from Schizosaccharomyces pombe (strain 972 / ATCC 24843) (Fission yeast).